Consider the following 231-residue polypeptide: Potassium/proton antiporter CemA (231 aa).

The next 4 helical transmembrane spans lie at 7–27 (FIPLLCLTSIVFLPWCISFTF), 104–124 (IHTILHFCTNIICFLILSVYS), 154–174 (ILFLIEFCVGYHSTGGWELMI), and 189–209 (IISFLVSILPAILDTIFKYWI).

It belongs to the CemA family.

It is found in the plastid. The protein resides in the chloroplast inner membrane. The enzyme catalyses K(+)(in) + H(+)(out) = K(+)(out) + H(+)(in). Its function is as follows. Contributes to K(+)/H(+) antiport activity by supporting proton efflux to control proton extrusion and homeostasis in chloroplasts in a light-dependent manner to modulate photosynthesis. Prevents excessive induction of non-photochemical quenching (NPQ) under continuous-light conditions. Indirectly promotes efficient inorganic carbon uptake into chloroplasts. This is Potassium/proton antiporter CemA from Pisum sativum (Garden pea).